Consider the following 318-residue polypeptide: N-succinylornithine carbamoyltransferase (318 aa).

Carbamoyl phosphate contacts are provided by residues 47-50, Trp75, and Arg110; that span reads SLRT. Glu142 is a binding site for N(2)-succinyl-L-ornithine. 147 to 150 lines the carbamoyl phosphate pocket; sequence HPLQ. His176 and Lys236 together coordinate N(2)-succinyl-L-ornithine. Position 274 to 275 (274 to 275) interacts with carbamoyl phosphate; that stretch reads CL. Residue Arg278 participates in N(2)-succinyl-L-ornithine binding. Arg302 lines the carbamoyl phosphate pocket.

The protein belongs to the aspartate/ornithine carbamoyltransferase superfamily. SOTCase family. In terms of assembly, homotrimer.

The catalysed reaction is N(2)-succinyl-L-ornithine + carbamoyl phosphate = N(2)-succinyl-L-citrulline + phosphate + H(+). Its pathway is amino-acid biosynthesis; L-arginine biosynthesis. Its function is as follows. Catalyzes the transfer of the carbamoyl group from carbamoyl phosphate to the delta-amino group of N(2)-succinyl-L-ornithine to produce N(2)-succinyl-L-citrulline. Is essential for arginine biosynthesis. Has no activity with either L-ornithine or L-aspartate as substrate. Also has no detectable AOTCase activity, being unable to convert N(2)-acetyl-L-ornithine to N(2)-acetyl-L-citrulline. The polypeptide is N-succinylornithine carbamoyltransferase (Bacteroides thetaiotaomicron (strain ATCC 29148 / DSM 2079 / JCM 5827 / CCUG 10774 / NCTC 10582 / VPI-5482 / E50)).